Consider the following 794-residue polypeptide: Zinc finger and BTB domain-containing protein 17 (794 aa).

A BTB domain is found at 1 to 104 (MDFPQHSQRV…VASFLQMQDI (104 aa)). The segment at 116 to 285 (EPSSTTGESA…QNLRSGTYGD (170 aa)) is disordered. Over residues 132 to 142 (GGDKRAKDEKA) the composition is skewed to basic and acidic residues. Low complexity predominate over residues 203-216 (SSMAAAEAEALSES). The span at 243–252 (VKEEGMHLDN) shows a compositional bias: basic and acidic residues. Acidic residues predominate over residues 254 to 263 (EPPEENEESA). Residues 260 to 299 (EESAGTDSGQELGMEGQNLRSGTYGDRTESKAYGSIIHKC) form an interaction with MYC region. 13 consecutive C2H2-type zinc fingers follow at residues 297–319 (HKCE…IRIH), 325–347 (FSCR…EKTH), 353–375 (YGCE…KKRH), 381–403 (YRCG…QLVH), 409–431 (YQCD…LETH), 437–459 (HKCP…LKIH), 465–487 (LKCR…LRIH), 493–515 (YVCT…VRIH), 519–543 (KPCQ…VRQH), 549–571 (YVCE…IRHH), 577–599 (HKCS…IIIH), 605–628 (YLCD…KTVH), and 708–730 (YACD…VRIH). Lys-388 is covalently cross-linked (Glycyl lysine isopeptide (Lys-Gly) (interchain with G-Cter in ubiquitin)). Lys-472 participates in a covalent cross-link: Glycyl lysine isopeptide (Lys-Gly) (interchain with G-Cter in ubiquitin). Residues 628-709 (HQGKAGIKIL…EDPNTHILYA (82 aa)) form an interaction with MYC region. The interval 628 to 794 (HQGKAGIKIL…TAPDCLPPAE (167 aa)) is interaction with HCFC1. Positions 769-794 (PRDGTEGQPTLAESPPTAPDCLPPAE) are disordered. Residues 784 to 794 (PTAPDCLPPAE) are compositionally biased toward pro residues.

It belongs to the krueppel C2H2-type zinc-finger protein family. Homooligomerizes (via the BTB/POZ domain), multimerization is required for DNA binding. Binds to the C-terminal helix-loop-helix motif of MYC which inhibits ZBTB17 transactivation and growth arrest activities and renders it insoluble in the nucleus. Also interacts with HCFC1, MAGEA4 and TMPRSS11A. Interacts (via the C-terminal zinc fingers) with GFI1; the interaction results in the recruitment of MYC to the CDKN1A/p21 and CDKN1B promoters and repression of transcription. Interacts with TRAF2, interfering with the binding of UBC13 to TRAF2, and inhibiting TRAF2 E3 ligase activity. Interacts with BCL6; the interaction inhibits ZBTB17 transactivation activity on target genes involved in cell cycle arrest. Interacts with ZBTB49; this interaction blocks ZBTB17-mediated repression of RB1. Post-translationally, undergoes 'Lys-48'-linked polyubiquitination at Lys-388 and Lys-472 and subsequent proteasomal degradation in a TRAF2-dependent manner and upon TNFA stimulation. As to expression, found in all the embryonic and adult tissues examined.

The protein localises to the nucleus. Transcription factor that can function as an activator or repressor depending on its binding partners, and by targeting negative regulators of cell cycle progression. Has been shown to bind to the promoters of adenovirus major late protein and cyclin D1 and activate transcription. Required for early embryonic development during gastrulation. Plays a critical role in early lymphocyte development, where it is essential to prevent apoptosis in lymphoid precursors, allowing them to survive in response to IL7 and undergo proper lineage commitment. Represses RB1 transcription; this repression can be blocked by interaction with ZBTB49. This Mus musculus (Mouse) protein is Zinc finger and BTB domain-containing protein 17 (Zbtb17).